The sequence spans 704 residues: SH3KBP1-binding protein 1 (704 aa).

The residue at position 2 (Ala2) is an N-acetylalanine. In terms of domain architecture, BTB spans 19-88; sequence EVIHLNVGGK…LRTKELDPRG (70 aa). A disordered region spans residues 145–165; it reads LVGPQQAGGRPAPVRRSNTMP. At Thr163 the chain carries Phosphothreonine. WD repeat units follow at residues 233-280, 283-322, 324-359, 428-466, and 548-586; these read RLDW…GGSE, VFHLGVPVEALFFVGNQLIATSHTGRIGVWNAVTKHWQVQ, VQPITSYDAAGSFLLLGCNNGSIYYVDVQKFPLRMK, VHRSPVTKIMLSEKHLISVCADSNHVRTWSVTRFRGMIS, and LECEGSRRLGSRPRRYLLTGQANGSLAMWDLTTAMDGLG. Over residues 611–644 the composition is skewed to low complexity; that stretch reads ASSRGSLPSPSPRTSLTSLHSAFSNTSLSSRRGS. Residues 611-704 form a disordered region; that stretch reads ASSRGSLPSP…PKTKLNETSF (94 aa). The short motif at 618–623 is the PXXXPR element; sequence PSPSPR. Residues Ser644 and Ser646 each carry the phosphoserine modification. Positions 678–683 match the PXXXPR motif; that stretch reads PTPAPR.

Belongs to the KCTD3 family. As to quaternary structure, monomer. Interacts with CUL3; interaction is direct and forms a 5:5 heterodecamer. Interacts (via PXXXPR motifs) with SH3KBP1 (via SH3 domains). Directly interacts with cathepsin B/CTSB.

It localises to the lysosome. Inhibits CBL-SH3KBP1 complex mediated down-regulation of EGFR signaling by sequestration of SH3KBP1. Binds to SH3KBP1 and prevents its interaction with CBL and inhibits translocation of SH3KBP1 to EGFR containing vesicles upon EGF stimulation. This is SH3KBP1-binding protein 1 (SHKBP1) from Bos taurus (Bovine).